The sequence spans 253 residues: tRNA pseudouridine synthase A (253 aa).

D52 (nucleophile) is an active-site residue. Y110 provides a ligand contact to substrate.

This sequence belongs to the tRNA pseudouridine synthase TruA family. Homodimer.

The enzyme catalyses uridine(38/39/40) in tRNA = pseudouridine(38/39/40) in tRNA. Functionally, formation of pseudouridine at positions 38, 39 and 40 in the anticodon stem and loop of transfer RNAs. The sequence is that of tRNA pseudouridine synthase A from Thermus thermophilus (strain ATCC BAA-163 / DSM 7039 / HB27).